Consider the following 688-residue polypeptide: DNA ligase (688 aa).

Residues 51-55, 100-101, and Glu129 each bind NAD(+); these read DSEYD and SL. Lys131 serves as the catalytic N6-AMP-lysine intermediate. Arg152, Glu189, Lys308, and Lys332 together coordinate NAD(+). Positions 426, 429, 444, and 450 each coordinate Zn(2+). The BRCT domain occupies 609–688; sequence ADEQPLKGQT…DELLALLANS (80 aa).

This sequence belongs to the NAD-dependent DNA ligase family. LigA subfamily. The cofactor is Mg(2+). Mn(2+) serves as cofactor.

The catalysed reaction is NAD(+) + (deoxyribonucleotide)n-3'-hydroxyl + 5'-phospho-(deoxyribonucleotide)m = (deoxyribonucleotide)n+m + AMP + beta-nicotinamide D-nucleotide.. Functionally, DNA ligase that catalyzes the formation of phosphodiester linkages between 5'-phosphoryl and 3'-hydroxyl groups in double-stranded DNA using NAD as a coenzyme and as the energy source for the reaction. It is essential for DNA replication and repair of damaged DNA. The protein is DNA ligase of Shewanella sp. (strain MR-7).